Reading from the N-terminus, the 272-residue chain is Short-chain dehydrogenase/reductase iacC (272 aa).

Positions 13, 59, and 88 each coordinate NADP(+). Residues serine 150 and tyrosine 169 each act as proton donor in the active site. NADP(+) is bound by residues tyrosine 169, lysine 173, and valine 202. Catalysis depends on lysine 173, which acts as the Lowers pKa of active site Tyr.

The protein belongs to the short-chain dehydrogenases/reductases (SDR) family.

The protein operates within secondary metabolite biosynthesis. Its function is as follows. Short-chain dehydrogenase/reductase; part of the gene cluster that mediates the biosynthesis of iso-A82775C, a enylepoxycyclohexane and biosynthetic precursor of the chloropestolide anticancer natural products. Within the cluster, the prenyltransferase iacE prenylates siccayne to generate pestalodiol E, using dimethylallyl diphosphate (DMAPP) as cosubstrate. The probable oxidoreductase iacF is then involved in the epoxidation of pestalodiol F to pestalodiol F, which is further converted to pestalofone A by the short-chain dehydrogenase/reductase iacG. Iso-A82775C is subsequently generated from pestalofone A by the short-chain dehydrogenase/reductase iacC. Iso-A82775C is further condensed with maldoxin via a Diels-Alder reaction to produce the anticancer natural products chloropestolides A to E. In Pestalotiopsis fici (strain W106-1 / CGMCC3.15140), this protein is Short-chain dehydrogenase/reductase iacC.